A 339-amino-acid chain; its full sequence is Cullin-associated NEDD8-dissociated protein 1, N-terminal part (339 aa).

HEAT repeat units lie at residues 5 to 42 and 50 to 87; these read HTIQ…NPCS and ASAT…RLPL.

In terms of assembly, interacts with candA-C. Interacts with unneddylated cullins culA and culD; interaction occurs only when complexed with candA-C.

The protein resides in the nucleus. Functionally, assembly factor of SCF (SKP1-CUL1-F-box protein) E3 ubiquitin ligase complexes that promotes the exchange of the substrate-recognition F-box subunit in SCF complexes, thereby playing a key role in the cellular repertoire of SCF complexes. Acts as a F-box protein exchange factor when interacting with candA-C. This is Cullin-associated NEDD8-dissociated protein 1, N-terminal part (candA-N) from Emericella nidulans (strain FGSC A4 / ATCC 38163 / CBS 112.46 / NRRL 194 / M139) (Aspergillus nidulans).